The following is a 500-amino-acid chain: Glycerol kinase (500 aa).

Thr13 contacts ADP. ATP is bound by residues Thr13, Thr14, and Ser15. Sn-glycerol 3-phosphate is bound at residue Thr13. Arg17 provides a ligand contact to ADP. 4 residues coordinate sn-glycerol 3-phosphate: Arg83, Glu84, Tyr135, and Asp245. Positions 83, 84, 135, 245, and 246 each coordinate glycerol. Residues Thr267 and Gly310 each coordinate ADP. Positions 267, 310, 314, and 411 each coordinate ATP. Residues Gly411 and Asn415 each contribute to the ADP site.

Belongs to the FGGY kinase family. In terms of assembly, homotetramer and homodimer (in equilibrium).

It catalyses the reaction glycerol + ATP = sn-glycerol 3-phosphate + ADP + H(+). Its pathway is polyol metabolism; glycerol degradation via glycerol kinase pathway; sn-glycerol 3-phosphate from glycerol: step 1/1. With respect to regulation, activated by phosphorylation and inhibited by fructose 1,6-bisphosphate (FBP). Functionally, key enzyme in the regulation of glycerol uptake and metabolism. Catalyzes the phosphorylation of glycerol to yield sn-glycerol 3-phosphate. This Carboxydothermus hydrogenoformans (strain ATCC BAA-161 / DSM 6008 / Z-2901) protein is Glycerol kinase.